We begin with the raw amino-acid sequence, 129 residues long: Histone H2A.J (129 aa).

The disordered stretch occupies residues 1-22 (MSGRGKQGGKVRAKAKSRSSRA). Residues Lys6 and Lys10 each carry the N6-acetyllysine modification. Over residues 7 to 19 (QGGKVRAKAKSRS) the composition is skewed to basic residues. Lys10 carries the post-translational modification N6-lactoyllysine; alternate. N5-methylglutamine is present on Gln105. The residue at position 121 (Thr121) is a Phosphothreonine; by DCAF1.

It belongs to the histone H2A family. As to quaternary structure, the nucleosome is a histone octamer containing two molecules each of H2A, H2B, H3 and H4 assembled in one H3-H4 heterotetramer and two H2A-H2B heterodimers. The octamer wraps approximately 147 bp of DNA. In terms of processing, glutamine methylation at Gln-105 (H2AQ104me) by FBL is specifically dedicated to polymerase I. It is present at 35S ribosomal DNA locus and impairs binding of the FACT complex. Post-translationally, monoubiquitination of Lys-120 (H2AXK119ub) gives a specific tag for epigenetic transcriptional repression. Following DNA double-strand breaks (DSBs), it is ubiquitinated through 'Lys-63' linkage of ubiquitin moieties. Phosphorylation on Ser-2 (H2AS1ph) is enhanced during mitosis. Phosphorylation on Ser-2 by RPS6KA5/MSK1 directly represses transcription. Acetylation of H3 inhibits Ser-2 phosphorylation by RPS6KA5/MSK1. Phosphorylation at Thr-121 (H2AT120ph) by DCAF1 is present in the regulatory region of many tumor suppresor genes and down-regulates their transcription.

The protein resides in the nucleus. Its subcellular location is the chromosome. Its function is as follows. Core component of nucleosome. Nucleosomes wrap and compact DNA into chromatin, limiting DNA accessibility to the cellular machineries which require DNA as a template. Histones thereby play a central role in transcription regulation, DNA repair, DNA replication and chromosomal stability. DNA accessibility is regulated via a complex set of post-translational modifications of histones, also called histone code, and nucleosome remodeling. The chain is Histone H2A.J from Bos taurus (Bovine).